Here is a 633-residue protein sequence, read N- to C-terminus: Extracellular metalloproteinase 3 (633 aa).

The first 18 residues, 1-18 (MHGLLLAGLLALPMNVLA), serve as a signal peptide directing secretion. A propeptide spanning residues 19-246 (HPAEQQTSSV…VHNVVDYVAS (228 aa)) is cleaved from the precursor. N410 carries N-linked (GlcNAc...) asparagine glycosylation. H429 provides a ligand contact to Zn(2+). The active site involves E430. H433 contacts Zn(2+). Residue N480 is glycosylated (N-linked (GlcNAc...) asparagine).

Belongs to the peptidase M36 family. The cofactor is Zn(2+).

It is found in the secreted. Its function is as follows. Secreted metalloproteinase probably acting as a virulence factor. The sequence is that of Extracellular metalloproteinase 3 (MEP3) from Arthroderma otae (Microsporum canis).